The chain runs to 258 residues: Phosphate import ATP-binding protein PstB (258 aa).

The ABC transporter domain occupies 5 to 247; sequence IDVSGLTAYY…SQIFSNPKEK (243 aa). 37–44 lines the ATP pocket; it reads GPSGCGKS.

Belongs to the ABC transporter superfamily. Phosphate importer (TC 3.A.1.7) family. In terms of assembly, the complex is composed of two ATP-binding proteins (PstB), two transmembrane proteins (PstC and PstA) and a solute-binding protein (PstS).

Its subcellular location is the cell membrane. The enzyme catalyses phosphate(out) + ATP + H2O = ADP + 2 phosphate(in) + H(+). In terms of biological role, part of the ABC transporter complex PstSACB involved in phosphate import. Responsible for energy coupling to the transport system. The chain is Phosphate import ATP-binding protein PstB from Frankia casuarinae (strain DSM 45818 / CECT 9043 / HFP020203 / CcI3).